Reading from the N-terminus, the 23-residue chain is Gastrin-releasing peptide (23 aa).

Methionine amide is present on M23.

The protein belongs to the bombesin/neuromedin-B/ranatensin family.

It localises to the secreted. The protein localises to the cytoplasmic vesicle. Its subcellular location is the secretory vesicle lumen. Functionally, stimulates the release of gastrin and other gastrointestinal hormones. The protein is Gastrin-releasing peptide (grp) of Oncorhynchus mykiss (Rainbow trout).